The chain runs to 270 residues: Probable septum site-determining protein MinC (270 aa).

The disordered stretch occupies residues 105 to 129; it reads DRRAPSSKAADEAPVQQAEPAAPAA. The span at 116–129 shows a compositional bias: low complexity; that stretch reads EAPVQQAEPAAPAA.

The protein belongs to the MinC family. In terms of assembly, interacts with MinD and FtsZ.

In terms of biological role, cell division inhibitor that blocks the formation of polar Z ring septums. Rapidly oscillates between the poles of the cell to destabilize FtsZ filaments that have formed before they mature into polar Z rings. Prevents FtsZ polymerization. The protein is Probable septum site-determining protein MinC of Burkholderia pseudomallei (strain 1106a).